We begin with the raw amino-acid sequence, 866 residues long: MGNRGMEELIPLVNKLQDAFSSIGQSCHLDLPQIAVVGGQSAGKSSVLENFVGRDFLPRGSGIVTRRPLILQLIFSKTEYAEFLHCKSRKFTDFEEVRQEIEAETDRVTGTNKGISPVPINLRIYSPHVLNLTLIDLPGITKVPVGDQPQDIEYQIKDMILQFISRESSLILAVTPANMDLANSDALKLAKEVDPQGLRTIGVITKLDLMDEGTDARDVLENKLLPLRRGYIGVVNRSQKDIEGKKDIRTALAAERKFFLSHPAYRHIADRMGTPHLQKTLNQQLTNHIRESLPALRSKLQSQLLSLEKEVEEYKNFRPDDPTRKTKALLQMVQQFGVDFEKRIEGSGDQVDTLELSGGARINRIFHERFPFELVKMEFDEKDLRREISYAIKNIHGVRTGLFTPDLAFEAIVKKQVVKLKEPCLKCVDLVIQELINTVRQCTSKLSSYPRLREETERIVTTYIREREGRTKDQILLLIDIEQSYINTNHEDFIGFANAQQRSTQLNKKRAVPNQVIRRGWLTINNISLMKGGSKEYWFVLTAESLSWYKDEEEKEKKYMLPLDNLKIRDVEKGFMSNKHVFAIFNTEQRNVYKDLRQIELACDSQEDVDSWKASFLRAGVYPEKDQAENEDGAQENTFSMDPQLERQVETIRNLVDSYVAIINKSIRDLMPKTIMHLMINNTKAFIHYELLAYLYSSADQSSLMEESADQAQRRDDMLRMYHALKEALNIIGDISTSTVSTPVPPPVDDTWIQNTSSHSPTPQRRPVSSVHPPGRPPAVRGPTPGPPLIPVPVGPASFSAPPIPSRPGPHPGVFANNDPFSAPPQIPSRPARIPPGIPPGVPSRRPPAAPSRPTIIRPAEPSLLD.

A Dynamin-type G domain is found at 28-294 (HLDLPQIAVV…LTNHIRESLP (267 aa)). Residues 38–45 (GGQSAGKS) form a G1 motif region. Positions 41, 43, 44, 45, 46, 59, and 60 each coordinate GDP. The tract at residues 64-66 (VTR) is G2 motif. A G3 motif region spans residues 136-139 (DLPG). Residues 205–208 (TKLD) form a G4 motif region. 3 residues coordinate GDP: Lys-206, Asp-208, and Asp-211. Tyr-231 carries the phosphotyrosine modification. The interval 235–238 (VNRS) is G5 motif. Residues Asn-236, Arg-237, and Gln-239 each contribute to the GDP site. N6-acetyllysine is present on Lys-299. A PH domain is found at 515–621 (QVIRRGWLTI…WKASFLRAGV (107 aa)). Tyr-593 bears the Phosphotyrosine mark. The residue at position 594 (Lys-594) is an N6-acetyllysine. The region spanning 649 to 740 (VETIRNLVDS…IIGDISTSTV (92 aa)) is the GED domain. The interval 737–866 (TSTVSTPVPP…IRPAEPSLLD (130 aa)) is disordered. Phosphothreonine is present on Thr-751. Residues 752–763 (WIQNTSSHSPTP) are compositionally biased toward polar residues. Phosphoserine; by CDK1 is present on Ser-760. Composition is skewed to pro residues over residues 784-794 (TPGPPLIPVPV), 802-811 (PPIPSRPGPH), and 822-851 (SAPPQIPSRPARIPPGIPPGVPSRRPPAAP).

Belongs to the TRAFAC class dynamin-like GTPase superfamily. Dynamin/Fzo/YdjA family. As to quaternary structure, oligomerizes into a helical polymer that self-assembles around the vesicle membrane, when associated to the menbrane through lipid binding. Interacts with SHANK1 and SHANK2. Interacts with SNX9. Interacts (via C-terminal proline-rich domain (PRD)) with SNX18 (via SH3 domain); this interaction regulates ATG9A and ATG16L1 trafficking from recycling endosomes to sites of autophagosome formation. Interacts with SNX33 (via SH3 domain). Interacts with MYO1E (via SH3 domain). Interacts with PSTPIP1 (via SH3 domain). Interacts with CTNND2. Interacts (via C-terminal proline-rich domain (PRD)) with BIN1 (via SH3 domain); this interaction allows the recruitment of DNM2 to the membrane tubules and inhibits self-assembly-stimulated GTPase activity on the membrane. Interacts with GABARAP, GABARAPL1 and GABARAPL2. Interacts with MAP1LC3B (the lipidate and non-lipidated LC3 form); this interaction mediates recycling endosome scission leading to autophagosome release. Interacts with ITSN1. Interacts with MYOF. Interacts (via C-terminal proline-rich domain (PRD)) with SH3BP4 (via SH3 domain); this interaction controls the GTPase activity and is prevented by EGFR-induced tyrosine phosphorylation of either DNM2 or SH3BP4. May interact with PIK3C3. May be a component of a complex composed of RAB5A (in GDP-bound form), DYN2 and PIK3C3. Interacts with SDC4; this interaction is markedly enhanced at focal ahesion site upon induction of focal adhesions and stress-fiber formation. Interacts with ACTN1. Interacts with CTTN; this interaction stimulates the intrinsic GTPase activity of DNM2 and stabilizes the association of DNM2 and actin filaments; in addition this interaction is stimulated by ligand binding to the receptor, leading to the recruitment of the DNM2-CTTN complex to the sequestered receptor-ligand complex to its internalization. Interacts with NOSTRIN (via SH3 domain); this interaction allows the recruitment of NOS3 to dynamin-positive structures. Interacts with TUBG1; this interaction may participate in centrosome cohesion. In terms of processing, phosphorylation at Ser-844 by GSK3-alpha relieves the inhibition of BIN1 and promotes endocytosis. Phosphorylation at Ser-760 by CDK1 is greatly increased upon mitotic entry. It regulates cytokinesis downstream of calcineurin, and does not affect clathrin-mediated endocytosis. Dephosphorylated by calcineurin/PP2 during cytokinesis in a Ca(2+)- and calmodulin-dependent manner. Phosphorylated on tyrosine residues by EGFR and after activation of SRC.

The protein localises to the cytoplasm. It localises to the cytoskeleton. The protein resides in the cytoplasmic vesicle. It is found in the clathrin-coated vesicle. Its subcellular location is the cell projection. The protein localises to the uropodium. It localises to the endosome. The protein resides in the microtubule organizing center. It is found in the centrosome. Its subcellular location is the centriole. The protein localises to the recycling endosome. It localises to the phagocytic cup. The protein resides in the phagosome membrane. It is found in the podosome. Its subcellular location is the cell junction. The protein localises to the postsynaptic density. It localises to the synapse. The protein resides in the synaptosome. It is found in the midbody. Its subcellular location is the membrane. The protein localises to the clathrin-coated pit. It catalyses the reaction GTP + H2O = GDP + phosphate + H(+). Functionally, catalyzes the hydrolysis of GTP and utilizes this energy to mediate vesicle scission at plasma membrane during endocytosis and filament remodeling at many actin structures during organization of the actin cytoskeleton. Plays an important role in vesicular trafficking processes, namely clathrin-mediated endocytosis (CME), exocytic and clathrin-coated vesicle from the trans-Golgi network, and PDGF stimulated macropinocytosis. During vesicular trafficking process, associates to the membrane, through lipid binding, and self-assembles into ring-like structure through oligomerization to form a helical polymer around the vesicle membrane and leading to vesicle scission. Plays a role in organization of the actin cytoskeleton by mediating arrangement of stress fibers and actin bundles in podocytes. During organization of the actin cytoskeleton, self-assembles into ring-like structure that directly bundles actin filaments to form typical membrane tubules decorated with dynamin spiral polymers. Self-assembly increases GTPase activity and the GTP hydrolysis causes the rapid depolymerization of dynamin spiral polymers, and results in dispersion of actin bundles. Remodels, through its interaction with CTTN, bundled actin filaments in a GTPase-dependent manner and plays a role in orchestrating the global actomyosin cytoskeleton. The interaction with CTTN stabilizes the interaction of DNM2 and actin filaments and stimulates the intrinsic GTPase activity that results in actin filament-barbed ends and increases the sensitivity of filaments in bundles to the actin depolymerizing factor, CFL1. Plays a role in the autophagy process, by participating in the formation of ATG9A vesicles destined for the autophagosomes through its interaction with SNX18, by mediating recycling endosome scission leading to autophagosome release through MAP1LC3B interaction. Also regulates maturation of apoptotic cell corpse-containing phagosomes by recruiting PIK3C3 to the phagosome membrane. Also plays a role in cytokinesis. May participate in centrosome cohesion through its interaction with TUBG1. Plays a role in the regulation of neuron morphology, axon growth and formation of neuronal growth cones. Involved in membrane tubulation. The chain is Dynamin-2 from Bos taurus (Bovine).